Reading from the N-terminus, the 417-residue chain is Phosphoglycerate kinase 2 (417 aa).

Serine 4 is subject to Phosphoserine. At lysine 11 the chain carries N6-acetyllysine. Residues valine 23, aspartate 24, phenylalanine 25, asparagine 26, glutamine 38, and arginine 39 each contribute to the (2R)-3-phosphoglycerate site. An N6-acetyllysine modification is found at lysine 48. The (2R)-3-phosphoglycerate site is built by serine 62, histidine 63, glycine 65, and arginine 66. An N6-acetyllysine mark is found at lysine 75, lysine 86, and lysine 97. (2R)-3-phosphoglycerate contacts are provided by leucine 122 and arginine 123. An N6-acetyllysine mark is found at lysine 131 and lysine 146. 2 residues coordinate (2R)-3-phosphoglycerate: histidine 170 and arginine 171. Tyrosine 196 is subject to Phosphotyrosine. Lysine 199 is subject to N6-acetyllysine. Glycine 214 contributes to the ADP binding site. A CDP-binding site is contributed by glycine 214. AMP is bound by residues alanine 215 and lysine 216. Alanine 215 lines the ATP pocket. Alanine 215 lines the Mg(2+) pocket. Aspartate 219 provides a ligand contact to CDP. A Mg(2+)-binding site is contributed by aspartate 219. Lysine 220 contributes to the AMP binding site. ATP is bound at residue lysine 220. Glycine 238 contacts ADP. Glycine 238 serves as a coordination point for CDP. Glycine 239 lines the AMP pocket. Glycine 239 contributes to the ATP binding site. N6-acetyllysine occurs at positions 267 and 291. Glycine 313 is an AMP binding site. Glycine 313 is an ATP binding site. Glycine 338, isoleucine 340, and phenylalanine 343 together coordinate CDP. Phenylalanine 343 contributes to the ADP binding site. Residue glutamate 344 coordinates AMP. Glutamate 344, aspartate 375, and threonine 376 together coordinate ATP. Aspartate 375 contributes to the Mg(2+) binding site.

Belongs to the phosphoglycerate kinase family. Monomer. The cofactor is Mg(2+). As to expression, testis and sperm. Localized on the principle piece in the sperm (at protein level). Testis-specific.

The protein resides in the cytoplasm. The catalysed reaction is (2R)-3-phosphoglycerate + ATP = (2R)-3-phospho-glyceroyl phosphate + ADP. The protein operates within carbohydrate degradation; glycolysis; pyruvate from D-glyceraldehyde 3-phosphate: step 2/5. Essential for sperm motility and male fertility but is not required for the completion of spermatogenesis. This is Phosphoglycerate kinase 2 (Pgk2) from Mus musculus (Mouse).